Reading from the N-terminus, the 143-residue chain is Large ribosomal subunit protein uL11 (143 aa).

This sequence belongs to the universal ribosomal protein uL11 family. Part of the ribosomal stalk of the 50S ribosomal subunit. Interacts with L10 and the large rRNA to form the base of the stalk. L10 forms an elongated spine to which L12 dimers bind in a sequential fashion forming a multimeric L10(L12)X complex. One or more lysine residues are methylated.

Functionally, forms part of the ribosomal stalk which helps the ribosome interact with GTP-bound translation factors. The protein is Large ribosomal subunit protein uL11 of Allorhizobium ampelinum (strain ATCC BAA-846 / DSM 112012 / S4) (Agrobacterium vitis (strain S4)).